We begin with the raw amino-acid sequence, 674 residues long: UvrABC system protein C (674 aa).

The GIY-YIG domain occupies 16–95 (TNPGVYRFRD…IKEFKPRFNV (80 aa)). In terms of domain architecture, UVR spans 207–242 (KRFTNKLEKQMAAAVARLDYEQAARIRDDITALRKV).

Belongs to the UvrC family. Interacts with UvrB in an incision complex.

The protein localises to the cytoplasm. The UvrABC repair system catalyzes the recognition and processing of DNA lesions. UvrC both incises the 5' and 3' sides of the lesion. The N-terminal half is responsible for the 3' incision and the C-terminal half is responsible for the 5' incision. This chain is UvrABC system protein C, found in Pseudarthrobacter chlorophenolicus (strain ATCC 700700 / DSM 12829 / CIP 107037 / JCM 12360 / KCTC 9906 / NCIMB 13794 / A6) (Arthrobacter chlorophenolicus).